The primary structure comprises 427 residues: 3-phosphoshikimate 1-carboxyvinyltransferase (427 aa).

The 3-phosphoshikimate site is built by Lys20, Ser21, and Arg25. Lys20 contributes to the phosphoenolpyruvate binding site. Phosphoenolpyruvate is bound by residues Gly92 and Arg120. 3-phosphoshikimate contacts are provided by Ser165, Gln167, Asp313, and Lys340. A phosphoenolpyruvate-binding site is contributed by Gln167. Asp313 (proton acceptor) is an active-site residue. Residues Arg344 and Arg388 each coordinate phosphoenolpyruvate.

It belongs to the EPSP synthase family. Monomer.

The protein resides in the cytoplasm. It catalyses the reaction 3-phosphoshikimate + phosphoenolpyruvate = 5-O-(1-carboxyvinyl)-3-phosphoshikimate + phosphate. It participates in metabolic intermediate biosynthesis; chorismate biosynthesis; chorismate from D-erythrose 4-phosphate and phosphoenolpyruvate: step 6/7. Functionally, catalyzes the transfer of the enolpyruvyl moiety of phosphoenolpyruvate (PEP) to the 5-hydroxyl of shikimate-3-phosphate (S3P) to produce enolpyruvyl shikimate-3-phosphate and inorganic phosphate. This is 3-phosphoshikimate 1-carboxyvinyltransferase from Geobacillus kaustophilus (strain HTA426).